Consider the following 164-residue polypeptide: D-aminoacyl-tRNA deacylase (164 aa).

Positions 72 and 89 each coordinate tRNA. Residue T90 is the Nucleophile of the active site. Positions 104–107 match the C-terminal adenosine nucleotide of tRNA motif; it reads HLAK. Residues 149–150 carry the Gly-cisPro motif, allows the protein to recognize chirality of D-amino acids motif; it reads GP.

The protein belongs to the DTD family. Homodimer.

It localises to the cytoplasm. It carries out the reaction glycyl-tRNA(Ala) + H2O = tRNA(Ala) + glycine + H(+). The enzyme catalyses a D-aminoacyl-tRNA + H2O = a tRNA + a D-alpha-amino acid + H(+). It catalyses the reaction D-tyrosyl-tRNA(Tyr) + H2O = D-tyrosine + tRNA(Tyr). In terms of biological role, D-aminoacyl-tRNA deacylase, with no observable activity on tRNAs charged with their cognate L-amino acid. Probably acts by rejecting L-amino acids from its binding site rather than specific recognition of D-amino acids. Catalyzes the hydrolysis of D-tyrosyl-tRNA(Tyr), has no activity on correctly charged L-tyrosyl-tRNA(Tyr). Hydrolyzes correctly charged, achiral, glycyl-tRNA(Gly). Deacylates mischarged D.melanogaster and E.coli glycyl-tRNA(Ala). Probably acts via tRNA-based rather than protein-based catalysis. Acts on tRNAs only when the D-amino acid is either attached to the ribose 3'-OH or transferred to the 3'-OH from the 2'-OH through rapid transesterification. Binds a number of other D-amino acids (D-Arg, D-Glu, D-His, D-Lys, D-Ser), suggesting it may also deacylate other mischarged tRNAs. The protein is D-aminoacyl-tRNA deacylase of Plasmodium falciparum (isolate 3D7).